A 293-amino-acid chain; its full sequence is Phosphatidylcholine-sterol acyltransferase (293 aa).

A glycan (N-linked (GlcNAc...) asparagine) is linked at asparagine 26. Serine 123 acts as the Nucleophile in catalysis. Asparagine 179 carries N-linked (GlcNAc...) asparagine glycosylation. A disulfide bridge links cysteine 220 with cysteine 263. Aspartate 252 (charge relay system) is an active-site residue. Asparagine 280 is a glycosylation site (N-linked (GlcNAc...) asparagine). The active-site Charge relay system is the histidine 284.

The protein belongs to the AB hydrolase superfamily. Lipase family.

Its subcellular location is the secreted. It carries out the reaction a sterol + a 1,2-diacyl-sn-glycero-3-phosphocholine = a sterol ester + a 1-acyl-sn-glycero-3-phosphocholine. APOA1 is the most potent activator in plasma. Also activated by APOE, APOC1 and APOA4. Functionally, central enzyme in the extracellular metabolism of plasma lipoproteins. Synthesized mainly in the liver and secreted into plasma where it converts cholesterol and phosphatidylcholines (lecithins) to cholesteryl esters and lysophosphatidylcholines on the surface of high and low density lipoproteins (HDLs and LDLs). The cholesterol ester is then transported back to the liver. Has a preference for plasma 16:0-18:2 or 18:O-18:2 phosphatidylcholines. Also produced in the brain by primary astrocytes, and esterifies free cholesterol on nascent APOE-containing lipoproteins secreted from glia and influences cerebral spinal fluid (CSF) APOE- and APOA1 levels. Together with APOE and the cholesterol transporter ABCA1, plays a key role in the maturation of glial-derived, nascent lipoproteins. Required for remodeling high-density lipoprotein particles into their spherical forms. The polypeptide is Phosphatidylcholine-sterol acyltransferase (LCAT) (Gerbilliscus gambianus (Gambian gerbil)).